A 293-amino-acid polypeptide reads, in one-letter code: Pyridoxal 5'-phosphate synthase subunit PdxS (293 aa).

D25 serves as a coordination point for D-ribose 5-phosphate. K82 serves as the catalytic Schiff-base intermediate with D-ribose 5-phosphate. D-ribulose 5-phosphate is bound at residue D103. D-ribose 5-phosphate is bound at residue G154. R166 lines the D-glyceraldehyde 3-phosphate pocket. D-ribose 5-phosphate contacts are provided by residues G215 and 236–237 (GS).

This sequence belongs to the PdxS/SNZ family. In terms of assembly, homohexamer and homododecamer. In the presence of PdxT, forms a dodecamer of heterodimers.

The enzyme catalyses aldehydo-D-ribose 5-phosphate + D-glyceraldehyde 3-phosphate + L-glutamine = pyridoxal 5'-phosphate + L-glutamate + phosphate + 3 H2O + H(+). It functions in the pathway cofactor biosynthesis; pyridoxal 5'-phosphate biosynthesis. Its function is as follows. Catalyzes the formation of pyridoxal 5'-phosphate from ribose 5-phosphate (RBP), glyceraldehyde 3-phosphate (G3P) and ammonia. The ammonia is provided by the PdxT subunit. Can also use ribulose 5-phosphate and dihydroxyacetone phosphate as substrates, resulting from enzyme-catalyzed isomerization of RBP and G3P, respectively. This chain is Pyridoxal 5'-phosphate synthase subunit PdxS, found in Thermotoga maritima (strain ATCC 43589 / DSM 3109 / JCM 10099 / NBRC 100826 / MSB8).